The chain runs to 736 residues: Zinc finger MYND domain-containing protein 15 (736 aa).

Disordered stretches follow at residues 70–94 (SLGQGAEPGPGPGLGASRLLGDEPP) and 109–192 (LEDG…KNAE). The segment covering 110-123 (EDGEEGEEEEEDEE) has biased composition (acidic residues). 2 stretches are compositionally biased toward basic and acidic residues: residues 124–135 (HGERPGMEKVEP) and 165–185 (ASREEGSREERPEDERAPEKR). Zn(2+) is bound by residues cysteine 307, cysteine 310, cysteine 322, cysteine 325, cysteine 331, cysteine 335, histidine 349, and cysteine 353. The segment at 307 to 353 (CHVCHKHSFEVKLTPCPQCSAVLYCGEACLQADWRRCPDDVSHRFWC) adopts an MYND-type zinc-finger fold. 2 disordered regions span residues 556–583 (DGPEVSLRPGSGVSARFNSGTKEKGGRR) and 696–736 (GGTV…RRRR). Pro residues predominate over residues 704–718 (GPAPRPPTPAAPPVP). A compositionally biased stretch (basic residues) spans 719-736 (ARRRRGEKKAARGPRRRR).

In terms of assembly, interacts with HDAC1, HDAC3, HDAC6 and, to a lesser extent, with HDAC7. As to expression, testis-specific. Expressed in pachytene spermatocytes and all developing spermatids, but not in Sertoli, nor Leydig cells (at protein level).

It localises to the nucleus. The protein resides in the cytoplasm. Acts as a transcriptional repressor through interaction with histone deacetylases (HDACs). May regulate haploid genes important for spermiogenesis. In Mus musculus (Mouse), this protein is Zinc finger MYND domain-containing protein 15 (Zmynd15).